Reading from the N-terminus, the 542-residue chain is Major facilitator superfamily domain-containing protein 6-like (542 aa).

The next 11 helical transmembrane spans lie at 46 to 66, 89 to 109, 198 to 218, 246 to 266, 272 to 292, 321 to 341, 352 to 372, 381 to 401, 404 to 424, 444 to 464, and 469 to 489; these read LGLS…LALL, LLSS…GILV, MFFL…PLEW, VGAA…FCRI, FYSY…LPIY, VTVI…LWLM, GICL…AGPL, WMLV…SFLW, WAVM…WWSV, FEAF…GFVV, and VNVL…ALAV.

The protein belongs to the major facilitator superfamily. MFSD6 family.

It localises to the membrane. This chain is Major facilitator superfamily domain-containing protein 6-like (mfsd6l), found in Danio rerio (Zebrafish).